The following is a 192-amino-acid chain: Imidazoleglycerol-phosphate dehydratase (192 aa).

It belongs to the imidazoleglycerol-phosphate dehydratase family.

The protein localises to the cytoplasm. It carries out the reaction D-erythro-1-(imidazol-4-yl)glycerol 3-phosphate = 3-(imidazol-4-yl)-2-oxopropyl phosphate + H2O. The protein operates within amino-acid biosynthesis; L-histidine biosynthesis; L-histidine from 5-phospho-alpha-D-ribose 1-diphosphate: step 6/9. The sequence is that of Imidazoleglycerol-phosphate dehydratase from Clostridioides difficile (strain 630) (Peptoclostridium difficile).